A 93-amino-acid polypeptide reads, in one-letter code: Alpha-defensin 5 (93 aa).

Residues Met1–Ala19 form the signal peptide. Positions Asp20 to Leu58 are excised as a propeptide. Disulfide bonds link Cys64–Cys92, Cys66–Cys81, and Cys71–Cys91.

The protein belongs to the alpha-defensin family.

The protein resides in the secreted. Its function is as follows. Probably contributes to the antimicrobial barrier function of the small bowel mucosa. The sequence is that of Alpha-defensin 5 (Defa5) from Mus musculus (Mouse).